The following is a 450-amino-acid chain: Bifunctional protein GlmU (450 aa).

Residues 1 to 229 form a pyrophosphorylase region; the sequence is MRRHAIILAA…VEEIMGVNDR (229 aa). UDP-N-acetyl-alpha-D-glucosamine is bound by residues 8 to 11, lysine 22, glutamine 72, and 77 to 78; these read LAAG and GT. Residue aspartate 102 participates in Mg(2+) binding. 3 residues coordinate UDP-N-acetyl-alpha-D-glucosamine: glycine 139, glutamate 154, and asparagine 227. Asparagine 227 lines the Mg(2+) pocket. The linker stretch occupies residues 230–250; sequence VMLSQAEKAMQRRTNHYHMLN. Residues 251 to 450 are N-acetyltransferase; the sequence is GVTIIDPDST…RQTTKEGYRK (200 aa). Residues arginine 332 and lysine 350 each contribute to the UDP-N-acetyl-alpha-D-glucosamine site. The active-site Proton acceptor is the histidine 362. Positions 365 and 376 each coordinate UDP-N-acetyl-alpha-D-glucosamine. Residues 385–386, alanine 422, and arginine 439 contribute to the acetyl-CoA site; that span reads NY.

It in the N-terminal section; belongs to the N-acetylglucosamine-1-phosphate uridyltransferase family. This sequence in the C-terminal section; belongs to the transferase hexapeptide repeat family. As to quaternary structure, homotrimer. Mg(2+) is required as a cofactor.

It is found in the cytoplasm. It catalyses the reaction alpha-D-glucosamine 1-phosphate + acetyl-CoA = N-acetyl-alpha-D-glucosamine 1-phosphate + CoA + H(+). It carries out the reaction N-acetyl-alpha-D-glucosamine 1-phosphate + UTP + H(+) = UDP-N-acetyl-alpha-D-glucosamine + diphosphate. It participates in nucleotide-sugar biosynthesis; UDP-N-acetyl-alpha-D-glucosamine biosynthesis; N-acetyl-alpha-D-glucosamine 1-phosphate from alpha-D-glucosamine 6-phosphate (route II): step 2/2. It functions in the pathway nucleotide-sugar biosynthesis; UDP-N-acetyl-alpha-D-glucosamine biosynthesis; UDP-N-acetyl-alpha-D-glucosamine from N-acetyl-alpha-D-glucosamine 1-phosphate: step 1/1. The protein operates within bacterial outer membrane biogenesis; LPS lipid A biosynthesis. In terms of biological role, catalyzes the last two sequential reactions in the de novo biosynthetic pathway for UDP-N-acetylglucosamine (UDP-GlcNAc). The C-terminal domain catalyzes the transfer of acetyl group from acetyl coenzyme A to glucosamine-1-phosphate (GlcN-1-P) to produce N-acetylglucosamine-1-phosphate (GlcNAc-1-P), which is converted into UDP-GlcNAc by the transfer of uridine 5-monophosphate (from uridine 5-triphosphate), a reaction catalyzed by the N-terminal domain. This chain is Bifunctional protein GlmU, found in Staphylococcus aureus (strain NCTC 8325 / PS 47).